The chain runs to 386 residues: Dual-specificity RNA methyltransferase RlmN (386 aa).

Residue glutamate 96 is the Proton acceptor of the active site. Residues 102-340 (ENDRATLCVS…VITRRTRGED (239 aa)) form the Radical SAM core domain. Cysteine 109 and cysteine 345 are joined by a disulfide. The [4Fe-4S] cluster site is built by cysteine 116, cysteine 120, and cysteine 123. Residues 170-171 (GE), serine 202, 224-226 (SIH), and asparagine 302 each bind S-adenosyl-L-methionine. The active-site S-methylcysteine intermediate is the cysteine 345.

It belongs to the radical SAM superfamily. RlmN family. [4Fe-4S] cluster serves as cofactor.

The protein resides in the cytoplasm. The catalysed reaction is adenosine(2503) in 23S rRNA + 2 reduced [2Fe-2S]-[ferredoxin] + 2 S-adenosyl-L-methionine = 2-methyladenosine(2503) in 23S rRNA + 5'-deoxyadenosine + L-methionine + 2 oxidized [2Fe-2S]-[ferredoxin] + S-adenosyl-L-homocysteine. It carries out the reaction adenosine(37) in tRNA + 2 reduced [2Fe-2S]-[ferredoxin] + 2 S-adenosyl-L-methionine = 2-methyladenosine(37) in tRNA + 5'-deoxyadenosine + L-methionine + 2 oxidized [2Fe-2S]-[ferredoxin] + S-adenosyl-L-homocysteine. Specifically methylates position 2 of adenine 2503 in 23S rRNA and position 2 of adenine 37 in tRNAs. m2A2503 modification seems to play a crucial role in the proofreading step occurring at the peptidyl transferase center and thus would serve to optimize ribosomal fidelity. The sequence is that of Dual-specificity RNA methyltransferase RlmN from Colwellia psychrerythraea (strain 34H / ATCC BAA-681) (Vibrio psychroerythus).